We begin with the raw amino-acid sequence, 274 residues long: Photosystem II extrinsic protein O (274 aa).

The first 28 residues, 1 to 28 (MRFRPSIVALLSVCFGLLTFLYSGSAFA), serve as a signal peptide directing secretion.

It belongs to the PsbO family. PSII is composed of 1 copy each of membrane proteins PsbA, PsbB, PsbC, PsbD, PsbE, PsbF, PsbH, PsbI, PsbJ, PsbK, PsbL, PsbM, PsbT, PsbX, PsbY, PsbZ, Psb30/Ycf12, peripheral proteins PsbO, CyanoQ (PsbQ), PsbU, PsbV and a large number of cofactors. It forms dimeric complexes. Contacts PsbQ.

It is found in the cellular thylakoid membrane. One of the extrinsic, lumenal subunits of photosystem II (PSII), which stabilize and protect the oxygen-evolving complex. PSII is a light-driven water plastoquinone oxidoreductase, using light energy to abstract electrons from H(2)O, generating a proton gradient subsequently used for ATP formation. Required for dimerization of PSII and for binding of PsbQ to PSII. The polypeptide is Photosystem II extrinsic protein O (Synechocystis sp. (strain ATCC 27184 / PCC 6803 / Kazusa)).